A 374-amino-acid chain; its full sequence is Putative F-box protein At3g16590 (374 aa).

The region spanning 1-45 (MPTKLPLELEDEILLRVPPLSLTRFRTVCKRWNTLFNDQRFINNH) is the F-box domain.

The protein is Putative F-box protein At3g16590 of Arabidopsis thaliana (Mouse-ear cress).